A 90-amino-acid chain; its full sequence is Co-chaperonin GroES (90 aa).

It belongs to the GroES chaperonin family. In terms of assembly, heptamer of 7 subunits arranged in a ring. Interacts with the chaperonin GroEL.

The protein localises to the cytoplasm. Its function is as follows. Together with the chaperonin GroEL, plays an essential role in assisting protein folding. The GroEL-GroES system forms a nano-cage that allows encapsulation of the non-native substrate proteins and provides a physical environment optimized to promote and accelerate protein folding. GroES binds to the apical surface of the GroEL ring, thereby capping the opening of the GroEL channel. In Borreliella burgdorferi (strain ATCC 35210 / DSM 4680 / CIP 102532 / B31) (Borrelia burgdorferi), this protein is Co-chaperonin GroES.